We begin with the raw amino-acid sequence, 300 residues long: Probable protein phosphatase 2C 3 (300 aa).

A PPM-type phosphatase domain is found at 23 to 298; it reads IFAASEMQGW…DNMTTILVYL (276 aa). Residues aspartate 57, glycine 58, aspartate 237, and aspartate 289 each coordinate Mn(2+).

This sequence belongs to the PP2C family. The cofactor is Mg(2+). Mn(2+) serves as cofactor.

It localises to the membrane. It catalyses the reaction O-phospho-L-seryl-[protein] + H2O = L-seryl-[protein] + phosphate. The catalysed reaction is O-phospho-L-threonyl-[protein] + H2O = L-threonyl-[protein] + phosphate. Its function is as follows. Enzyme with a broad specificity. In Paramecium tetraurelia, this protein is Probable protein phosphatase 2C 3.